The primary structure comprises 128 residues: Large ribosomal subunit protein bL17 (128 aa).

It belongs to the bacterial ribosomal protein bL17 family. In terms of assembly, part of the 50S ribosomal subunit. Contacts protein L32.

This Pseudomonas syringae pv. tomato (strain ATCC BAA-871 / DC3000) protein is Large ribosomal subunit protein bL17.